The chain runs to 291 residues: Heterogeneous nuclear ribonucleoprotein D-like-B (291 aa).

RRM domains lie at Ser-34–Glu-116 and Lys-119–Pro-196. The segment at Pro-196–Asn-226 is disordered. Residues Gly-210 to Gln-222 are compositionally biased toward gly residues.

It localises to the nucleus. The protein localises to the cytoplasm. Its function is as follows. Acts as a transcriptional regulator. Binds DNA and RNA. This Xenopus laevis (African clawed frog) protein is Heterogeneous nuclear ribonucleoprotein D-like-B (hnrnpdl-b).